The sequence spans 364 residues: GTPase Obg (364 aa).

Residues 1-159 (MKFLDEAKVY…KTIWLHLKLI (159 aa)) form the Obg domain. One can recognise an OBG-type G domain in the interval 160 to 327 (ADAGLVGLPN…VLRALRDIIV (168 aa)). Residues 166–173 (GLPNAGKS), 191–195 (FTTLH), 212–215 (DIPG), 279–282 (SQID), and 308–310 (SAV) contribute to the GTP site. 2 residues coordinate Mg(2+): Ser-173 and Thr-193. Residues 333–364 (EKPAKVPKLRHRDMVVTDEGEDKGGDEGDDQP) are disordered.

This sequence belongs to the TRAFAC class OBG-HflX-like GTPase superfamily. OBG GTPase family. In terms of assembly, monomer. Requires Mg(2+) as cofactor.

It is found in the cytoplasm. Its function is as follows. An essential GTPase which binds GTP, GDP and possibly (p)ppGpp with moderate affinity, with high nucleotide exchange rates and a fairly low GTP hydrolysis rate. Plays a role in control of the cell cycle, stress response, ribosome biogenesis and in those bacteria that undergo differentiation, in morphogenesis control. The sequence is that of GTPase Obg from Rhizobium johnstonii (strain DSM 114642 / LMG 32736 / 3841) (Rhizobium leguminosarum bv. viciae).